Reading from the N-terminus, the 164-residue chain is NADH-quinone oxidoreductase subunit I (164 aa).

4Fe-4S ferredoxin-type domains lie at 54-84 and 95-124; these read LRRYPNGEERCIACKLCEAICPAQAITIEAG and VRYDIDMVKCIYCGFCQEACPVDAIVEGPN. Residues C64, C67, C70, C74, C104, C107, C110, and C114 each coordinate [4Fe-4S] cluster.

This sequence belongs to the complex I 23 kDa subunit family. NDH-1 is composed of 14 different subunits. Subunits NuoA, H, J, K, L, M, N constitute the membrane sector of the complex. It depends on [4Fe-4S] cluster as a cofactor.

It is found in the cell inner membrane. The catalysed reaction is a quinone + NADH + 5 H(+)(in) = a quinol + NAD(+) + 4 H(+)(out). In terms of biological role, NDH-1 shuttles electrons from NADH, via FMN and iron-sulfur (Fe-S) centers, to quinones in the respiratory chain. The immediate electron acceptor for the enzyme in this species is believed to be ubiquinone. Couples the redox reaction to proton translocation (for every two electrons transferred, four hydrogen ions are translocated across the cytoplasmic membrane), and thus conserves the redox energy in a proton gradient. In Mesorhizobium japonicum (strain LMG 29417 / CECT 9101 / MAFF 303099) (Mesorhizobium loti (strain MAFF 303099)), this protein is NADH-quinone oxidoreductase subunit I.